The primary structure comprises 191 residues: Small ribosomal subunit protein uS5 (191 aa).

An S5 DRBM domain is found at 21 to 84 (FADRLVAINR…EQAKRQMIRV (64 aa)). The segment at 155–191 (LRKESSPRSVAQRRGKKVADILPKVDAAPAPAETAEA) is disordered. The span at 181–191 (AAPAPAETAEA) shows a compositional bias: low complexity.

Belongs to the universal ribosomal protein uS5 family. Part of the 30S ribosomal subunit. Contacts proteins S4 and S8.

Its function is as follows. With S4 and S12 plays an important role in translational accuracy. In terms of biological role, located at the back of the 30S subunit body where it stabilizes the conformation of the head with respect to the body. The sequence is that of Small ribosomal subunit protein uS5 from Roseobacter denitrificans (strain ATCC 33942 / OCh 114) (Erythrobacter sp. (strain OCh 114)).